Consider the following 227-residue polypeptide: Translation initiation factor 6 (227 aa).

Belongs to the eIF-6 family.

In terms of biological role, binds to the 50S ribosomal subunit and prevents its association with the 30S ribosomal subunit to form the 70S initiation complex. This is Translation initiation factor 6 from Staphylothermus marinus (strain ATCC 43588 / DSM 3639 / JCM 9404 / F1).